Reading from the N-terminus, the 847-residue chain is MDIRNEFLQFFQNKGHAVYPSMPLVPNDATLLFTNAGMVQFKDIFTGIVPHPSIPRATSSQLCMRAGGKHNDLENVGYTARHHTLFEMLGNFSFGDYFKEEAILFAWEFVTKNLGFKPKDLYISVHEKDDEAVKLWEKFVPVDRIKKMGDKDNFWQMGDSGPCGPCSEIYIDQGEKHFKGSEDYFGGEGDRFLEIWNLVFMQYERSNDGVLSPLPKPSIDTGMGLERVQALLEHKLNNFDSSLFAPLMEEISELTSLDYTSEFQPSFRVVADHARAVAFLLAQGVHFNKEGRGYVLRRILRRALRHGYLMGLKEAFLYKVVGVVCEQFSNTHAYLKESKEMVMKECFEEEERFLETLESGMELFNLSLKHLNENKIFDGKIAFKLYDTFGFPLDLTNDMLRSHGACVDMQGFELCMQEQVKRSKASWKGKQDNADFSAILNAYAPNEFVGYETTECPAKALGFFDSDFKEIIEANPNQEVWVLLEKTPFYAEGGGAIGDRGALFKDNEEAAIVLDTKNFFGLNFSLLEIKKALKKGDQVIAQVSDERLEIAKHHSATHLLQSALREVLGSHVSQAGSLVESKRLRFDFSHPKVLNDEELEKVEDLVNAQIFKHLNSHVEHMPLNQAKDKGALALFGEKYAENVRVVSFKEASIELCGGIHVENTGLIGGFRIVKESGVSSGVRRIEAVCGKAFYQLAKEESKELKNAKTLLKNNDVIAGINKLKESVKNSQKAPVSVDLPVEKIHGVNLVVGVVEQGDIKEMIDRLKSKHERLLAMVFKKENERITLACGVKNAPIKANVWANEVAQILGGKGGGRDDFASAGGKDIENLQAALNLAKNTALKALEG.

His554, His558, Cys656, and His660 together coordinate Zn(2+).

It belongs to the class-II aminoacyl-tRNA synthetase family. Zn(2+) serves as cofactor.

The protein resides in the cytoplasm. The catalysed reaction is tRNA(Ala) + L-alanine + ATP = L-alanyl-tRNA(Ala) + AMP + diphosphate. Its function is as follows. Catalyzes the attachment of alanine to tRNA(Ala) in a two-step reaction: alanine is first activated by ATP to form Ala-AMP and then transferred to the acceptor end of tRNA(Ala). Also edits incorrectly charged Ser-tRNA(Ala) and Gly-tRNA(Ala) via its editing domain. The polypeptide is Alanine--tRNA ligase (Helicobacter pylori (strain HPAG1)).